Here is a 613-residue protein sequence, read N- to C-terminus: Dihydroxy-acid dehydratase (613 aa).

Aspartate 81 provides a ligand contact to Mg(2+). Cysteine 122 is a [2Fe-2S] cluster binding site. Residues aspartate 123 and lysine 124 each coordinate Mg(2+). At lysine 124 the chain carries N6-carboxylysine. Position 195 (cysteine 195) interacts with [2Fe-2S] cluster. Residue glutamate 491 coordinates Mg(2+). Serine 517 serves as the catalytic Proton acceptor.

The protein belongs to the IlvD/Edd family. As to quaternary structure, homodimer. [2Fe-2S] cluster is required as a cofactor. It depends on Mg(2+) as a cofactor.

It catalyses the reaction (2R)-2,3-dihydroxy-3-methylbutanoate = 3-methyl-2-oxobutanoate + H2O. It carries out the reaction (2R,3R)-2,3-dihydroxy-3-methylpentanoate = (S)-3-methyl-2-oxopentanoate + H2O. The protein operates within amino-acid biosynthesis; L-isoleucine biosynthesis; L-isoleucine from 2-oxobutanoate: step 3/4. Its pathway is amino-acid biosynthesis; L-valine biosynthesis; L-valine from pyruvate: step 3/4. Functionally, functions in the biosynthesis of branched-chain amino acids. Catalyzes the dehydration of (2R,3R)-2,3-dihydroxy-3-methylpentanoate (2,3-dihydroxy-3-methylvalerate) into 2-oxo-3-methylpentanoate (2-oxo-3-methylvalerate) and of (2R)-2,3-dihydroxy-3-methylbutanoate (2,3-dihydroxyisovalerate) into 2-oxo-3-methylbutanoate (2-oxoisovalerate), the penultimate precursor to L-isoleucine and L-valine, respectively. This Vibrio vulnificus (strain YJ016) protein is Dihydroxy-acid dehydratase.